The following is a 294-amino-acid chain: Phosphatidylglycerol--prolipoprotein diacylglyceryl transferase (294 aa).

Transmembrane regions (helical) follow at residues 21–41 (VSLH…LWLA), 60–80 (LLYV…VLFY), 96–116 (WDGG…MIWF), 124–144 (FFQV…LGRI), 199–219 (SQLY…NIFV), 226–246 (GSVS…VEFF), and 259–279 (ISMG…FMVW). R143 is an a 1,2-diacyl-sn-glycero-3-phospho-(1'-sn-glycerol) binding site.

The protein belongs to the Lgt family.

The protein resides in the cell inner membrane. It catalyses the reaction L-cysteinyl-[prolipoprotein] + a 1,2-diacyl-sn-glycero-3-phospho-(1'-sn-glycerol) = an S-1,2-diacyl-sn-glyceryl-L-cysteinyl-[prolipoprotein] + sn-glycerol 1-phosphate + H(+). It functions in the pathway protein modification; lipoprotein biosynthesis (diacylglyceryl transfer). Catalyzes the transfer of the diacylglyceryl group from phosphatidylglycerol to the sulfhydryl group of the N-terminal cysteine of a prolipoprotein, the first step in the formation of mature lipoproteins. This chain is Phosphatidylglycerol--prolipoprotein diacylglyceryl transferase, found in Proteus mirabilis (strain HI4320).